Here is a 107-residue protein sequence, read N- to C-terminus: Glutaredoxin 4 (107 aa).

The region spanning 4-106 (IEKIERQIKD…KIISNAVLNS (103 aa)) is the Glutaredoxin domain. Residue Lys21 participates in glutathione binding. Cys29 is a binding site for [2Fe-2S] cluster. Glutathione is bound by residues Arg58, Phe70, and 83-84 (CS).

The protein belongs to the glutaredoxin family. Monothiol subfamily. Homodimer.

It localises to the cytoplasm. Monothiol glutaredoxin involved in the biogenesis of iron-sulfur clusters. The polypeptide is Glutaredoxin 4 (grxD) (Buchnera aphidicola subsp. Schizaphis graminum (strain Sg)).